The sequence spans 415 residues: Serine--tRNA ligase (415 aa).

231–233 (TAE) is a binding site for L-serine. 262–264 (RSE) is an ATP binding site. L-serine is bound at residue glutamate 285. 349 to 352 (EISS) serves as a coordination point for ATP. L-serine is bound at residue serine 383.

It belongs to the class-II aminoacyl-tRNA synthetase family. Type-1 seryl-tRNA synthetase subfamily. Homodimer. The tRNA molecule binds across the dimer.

It localises to the cytoplasm. It catalyses the reaction tRNA(Ser) + L-serine + ATP = L-seryl-tRNA(Ser) + AMP + diphosphate + H(+). The enzyme catalyses tRNA(Sec) + L-serine + ATP = L-seryl-tRNA(Sec) + AMP + diphosphate + H(+). Its pathway is aminoacyl-tRNA biosynthesis; selenocysteinyl-tRNA(Sec) biosynthesis; L-seryl-tRNA(Sec) from L-serine and tRNA(Sec): step 1/1. Functionally, catalyzes the attachment of serine to tRNA(Ser). Is also able to aminoacylate tRNA(Sec) with serine, to form the misacylated tRNA L-seryl-tRNA(Sec), which will be further converted into selenocysteinyl-tRNA(Sec). This Helicobacter pylori (strain ATCC 700392 / 26695) (Campylobacter pylori) protein is Serine--tRNA ligase.